The sequence spans 257 residues: Putative aldolase class 2 protein CC_1201 (257 aa).

The Zn(2+) site is built by His-114, His-116, and His-177.

This sequence belongs to the aldolase class II family. Zn(2+) serves as cofactor.

In Caulobacter vibrioides (strain ATCC 19089 / CIP 103742 / CB 15) (Caulobacter crescentus), this protein is Putative aldolase class 2 protein CC_1201.